The primary structure comprises 680 residues: DNA-directed RNA polymerase subunit beta' (680 aa).

Residues Cys-69, Cys-71, Cys-87, and Cys-90 each coordinate Zn(2+). Mg(2+) contacts are provided by Asp-489, Asp-491, and Asp-493.

The protein belongs to the RNA polymerase beta' chain family. RpoC1 subfamily. In plastids the minimal PEP RNA polymerase catalytic core is composed of four subunits: alpha, beta, beta', and beta''. When a (nuclear-encoded) sigma factor is associated with the core the holoenzyme is formed, which can initiate transcription. The cofactor is Mg(2+). It depends on Zn(2+) as a cofactor.

It localises to the plastid. Its subcellular location is the chloroplast. The enzyme catalyses RNA(n) + a ribonucleoside 5'-triphosphate = RNA(n+1) + diphosphate. DNA-dependent RNA polymerase catalyzes the transcription of DNA into RNA using the four ribonucleoside triphosphates as substrates. The protein is DNA-directed RNA polymerase subunit beta' of Aethionema grandiflorum (Persian stone-cress).